Consider the following 99-residue polypeptide: Small ribosomal subunit protein eS24 (99 aa).

The protein belongs to the eukaryotic ribosomal protein eS24 family. In terms of assembly, may be present in 2 copies per 70S ribosome. Part of the 30S ribosomal subunit, where it binds 16S rRNA at its canonical site at the bse of the body, as well as a possible second 50S binding site near 23S rRNA helix 45.

This Pyrococcus furiosus (strain ATCC 43587 / DSM 3638 / JCM 8422 / Vc1) protein is Small ribosomal subunit protein eS24.